The primary structure comprises 1069 residues: Leucine--tRNA ligase (1069 aa).

The interval 19–53 (TAEHGTGAANATASPSGAVPPSGATATAGTGDEPG) is disordered. The 'HIGH' region motif lies at 107–118 (PYPSGTGLHVGH). Positions 823 to 836 (GRFTHHGAPVDRRS) are enriched in basic and acidic residues. The interval 823–846 (GRFTHHGAPVDRRSGKMGKSLKNS) is disordered. The short motif at 838–842 (KMGKS) is the 'KMSKS' region element. Lys841 contributes to the ATP binding site.

It belongs to the class-I aminoacyl-tRNA synthetase family.

It is found in the cytoplasm. The enzyme catalyses tRNA(Leu) + L-leucine + ATP = L-leucyl-tRNA(Leu) + AMP + diphosphate. This is Leucine--tRNA ligase from Frankia alni (strain DSM 45986 / CECT 9034 / ACN14a).